Reading from the N-terminus, the 700-residue chain is MEERTFEMELAGRKLLVQIGKVAQQANGAAWVKYGDTVVLVTACASKEPREGIDFFPLTVEYEERLYSVGKIPGGFIKREGKPSEKAILSARLIDRPIRPLFPHGYRNDVQVIATVLSVDPDVQPEIVAMIGSSVALSISDIPFDGPTGAVAVGLVDGQFIINPNHEQREKSLMHLVVSGTKDAIVMVEAGAKEVPEETMLDAIMYAHEYIKQIVEFIEGIVKEVGVPKSEVILHEIDKELEEKVRAYATEKIYNALRTAEKKERNDNLDKVEQEVLEHFKEEYPDNLADIDEVLYNIMKEQMRKMITEERIRVDGRGLDDIRPIWCEVGVLPRTHGSAIFTRGQTQVLTVATLGALGDIQILDGIGDEEAKRYMHHYNFPPYSVGEVRPLRGPGRREIGHGALAERALEPVIPSEEEFPYTIRLVSEVLSSNGSTSQASVCGSTLALMDAGVPIKAPVAGVAMGLIKEGDVVSVLTDIQGIEDFLGDMDFKVAGTEKGITAIQMDIKIPGIDKEILKMALEKARRGRLYILSKMLEVIKEPRKQLSVYAPRVIRMVVDPEKIREIIGPGGKTISKIIAETGVKIDIEEDGRLYITASDLRSGERAKQMIEAITKDIAVGEIYLGKVLRITPFGAFVEIAPGKEGLVHISKLSKKRVQKVEDVVKVGDDILVKVTDIDKLGRISLSRKDALPDEEEEERN.

Positions 484 and 490 each coordinate Mg(2+). Residues 551–610 (PRVIRMVVDPEKIREIIGPGGKTISKIIAETGVKIDIEEDGRLYITASDLRSGERAKQMI) enclose the KH domain. Residues 620-688 (GEIYLGKVLR…KLGRISLSRK (69 aa)) enclose the S1 motif domain.

It belongs to the polyribonucleotide nucleotidyltransferase family. The cofactor is Mg(2+).

The protein resides in the cytoplasm. The catalysed reaction is RNA(n+1) + phosphate = RNA(n) + a ribonucleoside 5'-diphosphate. Functionally, involved in mRNA degradation. Catalyzes the phosphorolysis of single-stranded polyribonucleotides processively in the 3'- to 5'-direction. This is Polyribonucleotide nucleotidyltransferase from Thermoanaerobacter sp. (strain X514).